The following is a 605-amino-acid chain: Golgi-associated RAB2 interactor protein 3 (605 aa).

Disordered stretches follow at residues 234 to 265 (GEGI…AART) and 407 to 529 (YMSE…ALQK). Residues 239–265 (HASHGTASAASPSTSTPGAAEGGAART) are compositionally biased toward low complexity. Residues 434–457 (KKDRHPSRKSSHHRKAGESHRRRA) show a composition bias toward basic residues. A Bipartite nuclear localization signal motif is present at residues 441–458 (RKSSHHRKAGESHRRRAG). Residues 463 to 473 (KASSHRSASGH) are compositionally biased toward polar residues. The span at 475-484 (NTRDDKKEKG) shows a compositional bias: basic and acidic residues. Residues 489-500 (RGKRHGSSRKSS) are compositionally biased toward basic residues. The segment covering 513 to 526 (QELGKNQSASSTGA) has biased composition (polar residues). Phosphoserine is present on Ser-592.

Belongs to the GARIN family. As to quaternary structure, interacts (via N-terminus) with RAB2B (in GTP-bound form). Interacts with FRG1. Expressed in adult spermatocytes and spermatids (at protein level).

The protein resides in the golgi apparatus. The protein localises to the nucleus. Its subcellular location is the cajal body. Its function is as follows. May be involved in RNA biogenesis. This Homo sapiens (Human) protein is Golgi-associated RAB2 interactor protein 3.